A 513-amino-acid chain; its full sequence is uncharacterized protein (513 aa).

Residues 254 to 447 (IPQLPSKLLE…INTIRFHHNL (194 aa)) enclose the HDOD domain.

This is an uncharacterized protein from Treponema pallidum (strain Nichols).